The chain runs to 616 residues: Proline--tRNA ligase (616 aa).

The protein belongs to the class-II aminoacyl-tRNA synthetase family. ProS type 1 subfamily. Homodimer.

Its subcellular location is the cytoplasm. It carries out the reaction tRNA(Pro) + L-proline + ATP = L-prolyl-tRNA(Pro) + AMP + diphosphate. Catalyzes the attachment of proline to tRNA(Pro) in a two-step reaction: proline is first activated by ATP to form Pro-AMP and then transferred to the acceptor end of tRNA(Pro). As ProRS can inadvertently accommodate and process non-cognate amino acids such as alanine and cysteine, to avoid such errors it has two additional distinct editing activities against alanine. One activity is designated as 'pretransfer' editing and involves the tRNA(Pro)-independent hydrolysis of activated Ala-AMP. The other activity is designated 'posttransfer' editing and involves deacylation of mischarged Ala-tRNA(Pro). The misacylated Cys-tRNA(Pro) is not edited by ProRS. In Lactococcus lactis subsp. lactis (strain IL1403) (Streptococcus lactis), this protein is Proline--tRNA ligase.